We begin with the raw amino-acid sequence, 403 residues long: Ribose-phosphate pyrophosphokinase 1, chloroplastic (403 aa).

Residues 1-49 (MASLGLSFPPAAKTPTYLASSSSTFFSNSSLSVRTSQFRSRNSVFACVK) constitute a chloroplast transit peptide. Mg(2+)-binding residues include aspartate 217, histidine 219, aspartate 228, and aspartate 232. The tract at residues 303–318 (GKVAIMVDDMIDTAGT) is binding of phosphoribosylpyrophosphate.

Belongs to the ribose-phosphate pyrophosphokinase family. It depends on Mg(2+) as a cofactor.

It is found in the plastid. Its subcellular location is the chloroplast. The catalysed reaction is D-ribose 5-phosphate + ATP = 5-phospho-alpha-D-ribose 1-diphosphate + AMP + H(+). This chain is Ribose-phosphate pyrophosphokinase 1, chloroplastic (PRS1), found in Arabidopsis thaliana (Mouse-ear cress).